The sequence spans 311 residues: Pyrimidine-specific ribonucleoside hydrolase RihA (311 aa).

The active site involves histidine 240.

The protein belongs to the IUNH family. RihA subfamily.

Functionally, hydrolyzes cytidine or uridine to ribose and cytosine or uracil, respectively. The polypeptide is Pyrimidine-specific ribonucleoside hydrolase RihA (Salmonella paratyphi C (strain RKS4594)).